We begin with the raw amino-acid sequence, 84 residues long: NAD(P)H-quinone oxidoreductase subunit O (84 aa).

The protein belongs to the complex I NdhO subunit family. As to quaternary structure, NDH-1 can be composed of about 15 different subunits; different subcomplexes with different compositions have been identified which probably have different functions.

The protein localises to the cellular thylakoid membrane. It catalyses the reaction a plastoquinone + NADH + (n+1) H(+)(in) = a plastoquinol + NAD(+) + n H(+)(out). It carries out the reaction a plastoquinone + NADPH + (n+1) H(+)(in) = a plastoquinol + NADP(+) + n H(+)(out). In terms of biological role, NDH-1 shuttles electrons from an unknown electron donor, via FMN and iron-sulfur (Fe-S) centers, to quinones in the respiratory and/or the photosynthetic chain. The immediate electron acceptor for the enzyme in this species is believed to be plastoquinone. Couples the redox reaction to proton translocation, and thus conserves the redox energy in a proton gradient. Cyanobacterial NDH-1 also plays a role in inorganic carbon-concentration. The chain is NAD(P)H-quinone oxidoreductase subunit O from Parasynechococcus marenigrum (strain WH8102).